We begin with the raw amino-acid sequence, 206 residues long: MRILIPFKANNPKSRLSSILSEEERKELARLMLLDVIDAAKPFGEIKVVCPSELDVEGVEVVVDTSDLNTTVNKVMDEAPLAVIMSDLPLLSEEVLKRFFETEGDVVVAPGRKGGTNMLLVRKRGFRVSYHFGSFFKHLEMARKMGMKAKIFDSFYSSVDIDDESDLLELMMHGSGKKSYEFLRKIGFSVSFEETPRLERRVFMQP.

Belongs to the CofC family. In terms of assembly, homodimer.

It catalyses the reaction (2S)-2-phospholactate + GTP + H(+) = (2S)-lactyl-2-diphospho-5'-guanosine + diphosphate. It functions in the pathway cofactor biosynthesis; coenzyme F420 biosynthesis. In terms of biological role, guanylyltransferase that catalyzes the activation of (2S)-2-phospholactate (2-PL) as (2S)-lactyl-2-diphospho-5'-guanosine, via the condensation of 2-PL with GTP. It is involved in the biosynthesis of coenzyme F420, a hydride carrier cofactor. The sequence is that of 2-phospho-L-lactate guanylyltransferase from Archaeoglobus fulgidus (strain ATCC 49558 / DSM 4304 / JCM 9628 / NBRC 100126 / VC-16).